A 284-amino-acid polypeptide reads, in one-letter code: Homeobox protein six1b (284 aa).

The homeobox DNA-binding region spans 124 to 183; sequence GEETSYCFKEKSRGVLREWYTHNPYPSPREKRELAEATGLTTTQVSNWFKNRRQRDRAAE. Residues 167-238 are disordered; it reads QVSNWFKNRR…NSVLLLQGNM (72 aa). Positions 179 to 190 are enriched in basic and acidic residues; the sequence is DRAAEAKERENS. Composition is skewed to polar residues over residues 191-204 and 226-238; these read ENNNTGANKQNQLS and PDQNSVLLLQGNM.

This sequence belongs to the SIX/Sine oculis homeobox family. As to quaternary structure, interacts with eya1.

It localises to the nucleus. The protein localises to the cytoplasm. Functionally, transcription factor that is involved in the regulation of cell proliferation, apoptosis and embryonic development. Depending on context, functions as a transcriptional repressor or activator. Transcriptional activation is enhanced by eya1 (in vitro). Plays an important role in the development of the inner ear, where it promotes hair cell proliferation and inhibits proliferation of neural progenitor cells. Required for normal myogenesis. Plays a role in the development of fast muscle fibers throughout the body, as well as the development of craniofacial muscles. Required for normal expression of myod1 and myog during myogenesis. The chain is Homeobox protein six1b (six1b) from Danio rerio (Zebrafish).